The following is a 122-amino-acid chain: Small ribosomal subunit protein uS13 (122 aa).

The segment at 92–122 (HRNGLPVRGQRTHTNARTRKGKAKPIAGKKK) is disordered. Residues 101 to 122 (QRTHTNARTRKGKAKPIAGKKK) show a composition bias toward basic residues.

This sequence belongs to the universal ribosomal protein uS13 family. As to quaternary structure, part of the 30S ribosomal subunit. Forms a loose heterodimer with protein S19. Forms two bridges to the 50S subunit in the 70S ribosome.

Its function is as follows. Located at the top of the head of the 30S subunit, it contacts several helices of the 16S rRNA. In the 70S ribosome it contacts the 23S rRNA (bridge B1a) and protein L5 of the 50S subunit (bridge B1b), connecting the 2 subunits; these bridges are implicated in subunit movement. Contacts the tRNAs in the A and P-sites. The sequence is that of Small ribosomal subunit protein uS13 from Erythrobacter litoralis (strain HTCC2594).